The following is a 1381-amino-acid chain: MAYSFTEKKRIRKDFGKLPNILDVPYLLATQVDSYRQFLQDEVSEDARDTEVGLEGAFRSVFPIQSHSGNAELQYVSYRIGDPPFEVKECQSRGLTYAAPLRMLVRLALYDKEGGGVKDIKEQEVYMGEMPLMTSTGTFVVNGTERVIVNQLHRSPGVFFDHDKGKSHSSGKLLFSARVIPYRGSWLDFEFDPKDTIYVRIDRRRKLPATILLRALGYTPEEILYAFFDTDRFHLGSGNKVVLDLVPERLRGETASFDIVAGGETIVEAGRRVTARHVKQLQKSGVEQLEVPEDYLTGKIIAHDVIDPATGEILAEANTTLTPEITQSLFDAGIREIETLFVNDLDRGPYMSTTLAADATRSQMEALVEIYRMMRPGEPPTKDAAENLFHTLFFTSDRYDLSPVGRMKFNLRVGRDEVRGPGILYDGKYFAGLGNADKEADDLIEQYGESSDILDVLRELIDIRNGNGQVDDIDHLGNRRVRSVGEMAENVFRVGLVRVERAVKERLSLAESEGLMPQELINAKPVAAAIKEFFGSSQLSQFMDQNNPLSEVTHKRRISALGPGGLTRERAGFEVRDVHPTHYGRVCPIETPEGPNIGLINSLAVYARANRYGFLETAYRKVVDGQVTDQVEYLSAIEESRYVIAQANARVDESGYLADDLISCRHQNEFTMATADRVQYMDVSPRQIVSVAASLVPFLEHDDANRALMGANMQRQAVPTLRADKPLVGTGMERTVARDSGVIVTAERGGVVEQVDSGRIVVRVDDEETTPGEPGVDIYSLTKYTRSNQNTCFSQKPLVHVGDRVARGDALADGPSTDMGELALGQNMLVAFMPWNGYNFEDSILISEKLVKEDRYTSVHIEELTCVARDTKLGSEEITSDIPNVSESALSRLDESGIVYIGAEVKAGDILVGKVTPKGETQLTPEEKLLRAIFGEKASDVKDTSLRVPTGMDGTVIDVQVFTRDGVEKDERARAIEREEIARVRKDLDDEARIFEDDAYARLEKLLVGKVAEGGPKGLGSGAEVTEAYLQDLPRERWFEIRMRDEAVNQQLEAVRHQLETQRDRFERRFQEKKEKITAGDDLSPGVLKTVKVHLAVKRRLQPGDKFAGRHGNKGVISMIVPEEDMPYMDDGTPVEVVLSPLGVPSRMNVGQVLETHLGWAARGLGHQIGQMLEQQADAEALRGYLSEIYDASGRKEELETLSEEELQELCHNLKGGVPAATPVFDGANEGEIKRWLKLAGLPESGQTTLYDGRTGDAFDRPITVGYMYMLKLNHLVDDKVHARATGPYSLVTQQPLGGKAQFGGQRFGEMEVWALEAYGAAYTLQEMLTVKSDDVSGRTKMYKNIVDGDHRMEAGMPESFNVLVKEIRSLGINIELERDD.

It belongs to the RNA polymerase beta chain family. As to quaternary structure, the RNAP catalytic core consists of 2 alpha, 1 beta, 1 beta' and 1 omega subunit. When a sigma factor is associated with the core the holoenzyme is formed, which can initiate transcription.

It catalyses the reaction RNA(n) + a ribonucleoside 5'-triphosphate = RNA(n+1) + diphosphate. Its function is as follows. DNA-dependent RNA polymerase catalyzes the transcription of DNA into RNA using the four ribonucleoside triphosphates as substrates. This Halorhodospira halophila (strain DSM 244 / SL1) (Ectothiorhodospira halophila (strain DSM 244 / SL1)) protein is DNA-directed RNA polymerase subunit beta.